The chain runs to 456 residues: Alcohol acyltransferase 1 (456 aa).

Catalysis depends on proton acceptor residues His-166 and Asp-382.

Belongs to the plant acyltransferase family.

Functionally, involved in the biosynthesis of volatile esters which confer kiwifruit flavor. Alcohol acyl transferase that can use a wide range of alcohols as substrate to produce esters. The chain is Alcohol acyltransferase 1 from Actinidia chinensis var. chinensis (Chinese soft-hair kiwi).